Consider the following 310-residue polypeptide: Probable manganese-dependent inorganic pyrophosphatase (310 aa).

Mn(2+)-binding residues include histidine 9, aspartate 13, aspartate 15, aspartate 75, histidine 97, and aspartate 149.

The protein belongs to the PPase class C family. Requires Mn(2+) as cofactor.

Its subcellular location is the cytoplasm. The catalysed reaction is diphosphate + H2O = 2 phosphate + H(+). The polypeptide is Probable manganese-dependent inorganic pyrophosphatase (Bacillus cytotoxicus (strain DSM 22905 / CIP 110041 / 391-98 / NVH 391-98)).